A 114-amino-acid chain; its full sequence is Large ribosomal subunit protein bL19 (114 aa).

This sequence belongs to the bacterial ribosomal protein bL19 family.

In terms of biological role, this protein is located at the 30S-50S ribosomal subunit interface and may play a role in the structure and function of the aminoacyl-tRNA binding site. The sequence is that of Large ribosomal subunit protein bL19 from Heliobacterium modesticaldum (strain ATCC 51547 / Ice1).